We begin with the raw amino-acid sequence, 81 residues long: Styelin-D (81 aa).

A signal peptide spans 1 to 22; sequence MQMKATILIVLVALFMIQQSEA. W24 is subject to 6'-bromotryptophan. R26 is subject to 3,4-dihydroxyarginine. 3 positions are modified to 4,5-dihydroxylysine: K27, K30, and K34. 3',4'-dihydroxyphenylalanine is present on residues Y36 and Y37. A 4,5-dihydroxylysine modification is found at K38. K40 bears the 5-hydroxylysine mark. 3',4'-dihydroxyphenylalanine occurs at positions 41 and 42. 5-hydroxylysine is present on K44. L54 bears the Leucine amide mark. The propeptide at 56–81 is removed in mature form; the sequence is DMTDEEFQDFMKEVEQAREEELQSRQ.

Contains L-DOPA (3',4'-dihydroxyphenylalanine). In terms of tissue distribution, hemocytes and pharyngeal tissues.

It localises to the secreted. Its function is as follows. Bactericidal against several Gram-positive and Gram-negative bacteria. Plays a significant role in the innate immune mechanisms of S.clava. In Styela clava (Sea squirt), this protein is Styelin-D.